The chain runs to 317 residues: Probable deoxyhypusine synthase 1 (317 aa).

The active-site Nucleophile is Lys-285.

It belongs to the deoxyhypusine synthase family. Requires NAD(+) as cofactor.

It catalyses the reaction [eIF5A protein]-L-lysine + spermidine = [eIF5A protein]-deoxyhypusine + propane-1,3-diamine. It functions in the pathway protein modification; eIF5A hypusination. Its function is as follows. Catalyzes the NAD-dependent oxidative cleavage of spermidine and the subsequent transfer of the butylamine moiety of spermidine to the epsilon-amino group of a specific lysine residue of the eIF-5A precursor protein to form the intermediate deoxyhypusine residue. The sequence is that of Probable deoxyhypusine synthase 1 (dys1) from Methanosarcina mazei (strain ATCC BAA-159 / DSM 3647 / Goe1 / Go1 / JCM 11833 / OCM 88) (Methanosarcina frisia).